A 228-amino-acid polypeptide reads, in one-letter code: Mediator of RNA polymerase II transcription subunit 7-B (228 aa).

This sequence belongs to the Mediator complex subunit 7 family. As to quaternary structure, component of the Mediator complex.

The protein resides in the nucleus. In terms of biological role, component of the Mediator complex, a coactivator involved in the regulated transcription of nearly all RNA polymerase II-dependent genes. Mediator functions as a bridge to convey information from gene-specific regulatory proteins to the basal RNA polymerase II transcription machinery. Mediator is recruited to promoters by direct interactions with regulatory proteins and serves as a scaffold for the assembly of a functional preinitiation complex with RNA polymerase II and the general transcription factors. This Xenopus laevis (African clawed frog) protein is Mediator of RNA polymerase II transcription subunit 7-B (med7-b).